A 149-amino-acid chain; its full sequence is Arginine repressor (149 aa).

It belongs to the ArgR family.

The protein localises to the cytoplasm. The protein operates within amino-acid biosynthesis; L-arginine biosynthesis [regulation]. In terms of biological role, regulates arginine biosynthesis genes. The chain is Arginine repressor from Geobacillus sp. (strain WCH70).